The primary structure comprises 160 residues: Putative 4-hydroxy-4-methyl-2-oxoglutarate aldolase (160 aa).

Substrate contacts are provided by residues 75–78 and arginine 97; that span reads GDQL. Aspartate 98 provides a ligand contact to a divalent metal cation.

It belongs to the class II aldolase/RraA-like family. Homotrimer. The cofactor is a divalent metal cation.

It carries out the reaction 4-hydroxy-4-methyl-2-oxoglutarate = 2 pyruvate. The enzyme catalyses oxaloacetate + H(+) = pyruvate + CO2. Its function is as follows. Catalyzes the aldol cleavage of 4-hydroxy-4-methyl-2-oxoglutarate (HMG) into 2 molecules of pyruvate. Also contains a secondary oxaloacetate (OAA) decarboxylase activity due to the common pyruvate enolate transition state formed following C-C bond cleavage in the retro-aldol and decarboxylation reactions. The protein is Putative 4-hydroxy-4-methyl-2-oxoglutarate aldolase of Vibrio vulnificus (strain YJ016).